Here is a 252-residue protein sequence, read N- to C-terminus: Ribosomal RNA small subunit methyltransferase J (252 aa).

S-adenosyl-L-methionine contacts are provided by residues 101–102 (RD), 117–118 (ER), 153–154 (SS), and D171.

Belongs to the methyltransferase superfamily. RsmJ family.

It is found in the cytoplasm. It carries out the reaction guanosine(1516) in 16S rRNA + S-adenosyl-L-methionine = N(2)-methylguanosine(1516) in 16S rRNA + S-adenosyl-L-homocysteine + H(+). Its function is as follows. Specifically methylates the guanosine in position 1516 of 16S rRNA. The chain is Ribosomal RNA small subunit methyltransferase J from Salmonella typhimurium (strain LT2 / SGSC1412 / ATCC 700720).